An 89-amino-acid polypeptide reads, in one-letter code: Dolichol-phosphate mannose synthase subunit 3 (89 aa).

The next 2 helical transmembrane spans lie at 7-27 (ILSLLVAISAFWIGLLQAAII) and 33-53 (WLLPIYFVVSLGCYGLLMVGV).

Belongs to the DPM3 family. Component of the dolichol-phosphate mannose (DPM) synthase complex composed of DPMS1, DPMS2 and DPMS3; in the complex interacts directly with DPMS1 and DPMS2.

The protein resides in the endoplasmic reticulum membrane. The protein operates within protein modification; protein glycosylation. Functionally, regulates the biosynthesis of dolichol phosphate-mannose. Regulatory subunit of the dolichol-phosphate mannose (DPM) synthase complex; essential for the ER localization and stable expression of DPMS1. The chain is Dolichol-phosphate mannose synthase subunit 3 from Arabidopsis thaliana (Mouse-ear cress).